Reading from the N-terminus, the 284-residue chain is D-tagatose-1,6-bisphosphate aldolase subunit GatY (284 aa).

Residue Asp82 is the Proton donor of the active site. Positions 83 and 180 each coordinate Zn(2+). Residue Gly181 participates in dihydroxyacetone phosphate binding. A Zn(2+)-binding site is contributed by His208. Dihydroxyacetone phosphate-binding positions include 209 to 211 (GAS) and 230 to 233 (NVAT).

It belongs to the class II fructose-bisphosphate aldolase family. TagBP aldolase GatY subfamily. Forms a complex with GatZ. Zn(2+) is required as a cofactor.

The catalysed reaction is D-tagatofuranose 1,6-bisphosphate = D-glyceraldehyde 3-phosphate + dihydroxyacetone phosphate. Its pathway is carbohydrate metabolism; D-tagatose 6-phosphate degradation; D-glyceraldehyde 3-phosphate and glycerone phosphate from D-tagatose 6-phosphate: step 2/2. In terms of biological role, catalytic subunit of the tagatose-1,6-bisphosphate aldolase GatYZ, which catalyzes the reversible aldol condensation of dihydroxyacetone phosphate (DHAP or glycerone-phosphate) with glyceraldehyde 3-phosphate (G3P) to produce tagatose 1,6-bisphosphate (TBP). Requires GatZ subunit for full activity and stability. Is involved in the catabolism of galactitol. This chain is D-tagatose-1,6-bisphosphate aldolase subunit GatY, found in Salmonella paratyphi B (strain ATCC BAA-1250 / SPB7).